We begin with the raw amino-acid sequence, 148 residues long: Homoprotocatechuate degradative operon repressor (148 aa).

One can recognise an HTH marR-type domain in the interval 2–134 (HDSLTIALLQ…LTHLLEEFIA (133 aa)).

Repressor for the homoprotocatechuate catabolic pathway hpc operon. This Escherichia coli protein is Homoprotocatechuate degradative operon repressor (hpcR).